Consider the following 816-residue polypeptide: Phosphatidylinositol 4-kinase beta (816 aa).

The disordered stretch occupies residues 1-30 (MGDTVVEPTPLKPTSESTPGPAGSNGGSLL). G2 carries the post-translational modification N-acetylglycine. Positions 2-68 (GDTVVEPTPL…VKLLHGGVAI (67 aa)) are interaction with ACBD3. The 191-residue stretch at 52–242 (CQEVLEKVKL…GTKLRKLILS (191 aa)) folds into the PIK helical domain. The tract at residues 248–318 (AHRKRELPSL…TESIDNSFSS (71 aa)) is disordered. S258 is subject to Phosphoserine. A Phosphothreonine modification is found at T263. Phosphoserine occurs at positions 266, 275, 277, 284, and 294. 2 stretches are compositionally biased toward polar residues: residues 278 to 297 (DATA…SNPK) and 306 to 318 (SSST…SFSS). S428 is subject to Phosphoserine. T438 bears the Phosphothreonine mark. S511 carries the post-translational modification Phosphoserine. Phosphothreonine is present on residues T517 and T519. Residues 535-801 (EPWQEKVRRI…MVDGSMRSIT (267 aa)) form the PI3K/PI4K catalytic domain. A G-loop region spans residues 541–547 (VRRIREG). The catalytic loop stretch occupies residues 668-676 (QVKDRHNGN). Positions 687–711 (HIDFGFILSSSPRNLGFETSAFKLT) are activation loop.

The protein belongs to the PI3/PI4-kinase family. Type III PI4K subfamily. As to quaternary structure, interacts with ARF1 and ARF3 in the Golgi complex, but not with ARF4, ARF5 or ARF6. Interacts with NCS1/FREQ in a calcium-independent manner. Interacts with CALN1/CABP8 and CALN2/CABP7; in a calcium-dependent manner; this interaction competes with NCS1/FREQ binding. Interacts with ACBD3. Interacts with ARMH3, YWHAB, YWHAE, YWHAG, YWHAH, YWHAQ, YWHAZ and SFN. Interacts with GGA2 (via VHS domain); the interaction is important for PI4KB location at the Golgi apparatus membrane. Interacts with ATG9A. Mg(2+) is required as a cofactor. Mn(2+) serves as cofactor.

It localises to the endomembrane system. The protein resides in the mitochondrion outer membrane. Its subcellular location is the rough endoplasmic reticulum membrane. It is found in the golgi apparatus. The protein localises to the golgi apparatus membrane. It catalyses the reaction a 1,2-diacyl-sn-glycero-3-phospho-(1D-myo-inositol) + ATP = a 1,2-diacyl-sn-glycero-3-phospho-(1D-myo-inositol 4-phosphate) + ADP + H(+). With respect to regulation, inhibited by wortmannin. Increased kinase activity upon interaction with NCS1/FREQ. Its function is as follows. Phosphorylates phosphatidylinositol (PI) in the first committed step in the production of the second messenger inositol-1,4,5,-trisphosphate (PIP). May regulate Golgi disintegration/reorganization during mitosis, possibly via its phosphorylation. Involved in Golgi-to-plasma membrane trafficking. May play an important role in the inner ear development. The sequence is that of Phosphatidylinositol 4-kinase beta (PI4KB) from Otolemur garnettii (Small-eared galago).